Here is a 217-residue protein sequence, read N- to C-terminus: Imidazole glycerol phosphate synthase subunit HisH (217 aa).

Residues 3–217 (TIAIVDYGMG…IYRNFVHWKP (215 aa)) enclose the Glutamine amidotransferase type-1 domain. The active-site Nucleophile is cysteine 82. Catalysis depends on residues histidine 197 and glutamate 199.

Heterodimer of HisH and HisF.

It is found in the cytoplasm. The enzyme catalyses 5-[(5-phospho-1-deoxy-D-ribulos-1-ylimino)methylamino]-1-(5-phospho-beta-D-ribosyl)imidazole-4-carboxamide + L-glutamine = D-erythro-1-(imidazol-4-yl)glycerol 3-phosphate + 5-amino-1-(5-phospho-beta-D-ribosyl)imidazole-4-carboxamide + L-glutamate + H(+). The catalysed reaction is L-glutamine + H2O = L-glutamate + NH4(+). Its pathway is amino-acid biosynthesis; L-histidine biosynthesis; L-histidine from 5-phospho-alpha-D-ribose 1-diphosphate: step 5/9. Its function is as follows. IGPS catalyzes the conversion of PRFAR and glutamine to IGP, AICAR and glutamate. The HisH subunit catalyzes the hydrolysis of glutamine to glutamate and ammonia as part of the synthesis of IGP and AICAR. The resulting ammonia molecule is channeled to the active site of HisF. This is Imidazole glycerol phosphate synthase subunit HisH from Ralstonia nicotianae (strain ATCC BAA-1114 / GMI1000) (Ralstonia solanacearum).